The following is a 481-amino-acid chain: Protein FIZZY-RELATED 3 (481 aa).

Positions Pro100–Val165 are disordered. The segment covering Ser125–Ser136 has biased composition (low complexity). Residues Pro154–His163 show a composition bias toward basic residues. WD repeat units lie at residues Gln172–Leu209, Gly213–Thr252, Gly255–Ser292, Gly296–Lys335, Glu338–Ser380, Asp382–Thr423, and Gly426–Thr465.

Belongs to the WD repeat CDC20/Fizzy family. In terms of assembly, associates with the APC/C complex. Interacts with CDC20-1, CDC20-2, CYCA1-1, CYCA3-4, CYCB1-1 and CYCB1-2. Binds to GIG1 and PYM.

The protein operates within protein modification; protein ubiquitination. Activator protein that regulates the ubiquitin ligase activity and substrate specificity of the anaphase promoting complex/cyclosome (APC/C). The protein is Protein FIZZY-RELATED 3 (FZR3) of Arabidopsis thaliana (Mouse-ear cress).